The following is a 467-amino-acid chain: Light-independent protochlorophyllide reductase subunit N (467 aa).

Residues Cys22, Cys47, and Cys107 each contribute to the [4Fe-4S] cluster site.

Belongs to the BchN/ChlN family. In terms of assembly, protochlorophyllide reductase is composed of three subunits; ChlL, ChlN and ChlB. Forms a heterotetramer of two ChlB and two ChlN subunits. [4Fe-4S] cluster is required as a cofactor.

The protein resides in the plastid. It is found in the chloroplast. The enzyme catalyses chlorophyllide a + oxidized 2[4Fe-4S]-[ferredoxin] + 2 ADP + 2 phosphate = protochlorophyllide a + reduced 2[4Fe-4S]-[ferredoxin] + 2 ATP + 2 H2O. It functions in the pathway porphyrin-containing compound metabolism; chlorophyll biosynthesis (light-independent). Component of the dark-operative protochlorophyllide reductase (DPOR) that uses Mg-ATP and reduced ferredoxin to reduce ring D of protochlorophyllide (Pchlide) to form chlorophyllide a (Chlide). This reaction is light-independent. The NB-protein (ChlN-ChlB) is the catalytic component of the complex. This chain is Light-independent protochlorophyllide reductase subunit N, found in Chara vulgaris (Common stonewort).